The chain runs to 239 residues: RBPJ-interacting and tubulin-associated protein 1 (239 aa).

The Nuclear export signal signature appears at 12 to 24; it reads LDLSITGHSTALP. 2 disordered regions span residues 62-97 and 149-239; these read APPS…TPRK and LVQQ…PPWK. Positions 93–109 match the Nuclear localization signal motif; it reads GTPRKKIQYRVKSRTPS. The tract at residues 129–158 is interaction with RBPJ/RBPSUH; it reads WVKKEDTVKIRPLLWSPSPRLVQQSSMQNA. Polar residues-rich tracts occupy residues 149-159 and 203-221; these read LVQQSSMQNAK and RQRQ…SCSG. An interaction with tubulin region spans residues 158–239; it reads AKQGPLRAVH…VKMQERPPWK (82 aa).

Belongs to the RITA family. In terms of assembly, interacts with rbpj/rbpsuh.

It localises to the cytoplasm. The protein localises to the nucleus. Tubulin-binding protein that acts as a negative regulator of Notch signaling pathway. Shuttles between the cytoplasm and the nucleus and mediates the nuclear export of rbpj/rbpsuh, thereby preventing the interaction between rbpj/rbpsuh and NICD product of Notch proteins (Notch intracellular domain), leading to down-regulate Notch-mediated transcription. May play a role in neurogenesis. This Xenopus laevis (African clawed frog) protein is RBPJ-interacting and tubulin-associated protein 1 (rita1).